A 193-amino-acid chain; its full sequence is Inosine triphosphate pyrophosphatase (193 aa).

10–15 (TGNANK) is an ITP binding site. A Mg(2+)-binding site is contributed by glutamate 42. Residues lysine 54, 70–71 (DT), lysine 87, 146–149 (FGWD), lysine 169, and 174–175 (HR) contribute to the ITP site.

Belongs to the HAM1 NTPase family. Homodimer. Mg(2+) is required as a cofactor. Mn(2+) serves as cofactor.

Its subcellular location is the cytoplasm. The protein localises to the nucleus. It catalyses the reaction ITP + H2O = IMP + diphosphate + H(+). The catalysed reaction is dITP + H2O = dIMP + diphosphate + H(+). The enzyme catalyses XTP + H2O = XMP + diphosphate + H(+). Its function is as follows. Pyrophosphatase that hydrolyzes non-canonical purine nucleotides such as inosine triphosphate (ITP), deoxyinosine triphosphate (dITP) or xanthosine 5'-triphosphate (XTP) to their respective monophosphate derivatives. The enzyme does not distinguish between the deoxy- and ribose forms. Probably excludes non-canonical purines from RNA and DNA precursor pools, thus preventing their incorporation into RNA and DNA and avoiding chromosomal lesions. This is Inosine triphosphate pyrophosphatase from Mycosarcoma maydis (Corn smut fungus).